A 349-amino-acid chain; its full sequence is uncharacterized protein (349 aa).

In terms of domain architecture, THUMP spans 51-160; it reads NIIKENKNNL…QDESYISIFQ (110 aa).

This is an uncharacterized protein from Methanocaldococcus jannaschii (strain ATCC 43067 / DSM 2661 / JAL-1 / JCM 10045 / NBRC 100440) (Methanococcus jannaschii).